The chain runs to 680 residues: SH3 domain-binding protein 1 (680 aa).

Basic residues predominate over residues 1 to 11 (MMKRQLHRMRQ). 2 disordered regions span residues 1–24 (MMKR…TPET) and 160–184 (SQAA…HTTT). The tract at residues 1 to 275 (MMKRQLHRMR…TAAPFSRVYG (275 aa)) is interaction with CGNL1. The BAR domain maps to 81 to 262 (MAESFKELDP…RDNHSQADHS (182 aa)). Residues 160-169 (SQAAKNSGSN) show a composition bias toward polar residues. Ser241 and Ser262 each carry phosphoserine. In terms of domain architecture, Rho-GAP spans 276–469 (VSLRTHLQDL…ALIQNADTLF (194 aa)). The segment at 470–680 (PGDINFNVSG…RPRGLISETE (211 aa)) is interaction with CD2AP. Residues 488–680 (EKVSSQQVSE…RPRGLISETE (193 aa)) form a disordered region. Residues 502–516 (VTVPAPATTPAPTPA) are compositionally biased toward pro residues. Ser535 is subject to Phosphoserine. Positions 536–546 (PKVSRNPTETA) are enriched in polar residues. Positions 561-571 (PARPTMPPPQP) are enriched in pro residues. Ser582 bears the Phosphoserine mark. Residue Thr592 is modified to Phosphothreonine. An SH3-binding motif is present at residues 607-616 (APTMPPPLPP). The segment covering 609-621 (TMPPPLPPVPPQP) has biased composition (pro residues). Ser632 is modified (phosphoserine). Pro residues predominate over residues 660-671 (HPPPPALPPQPR).

In terms of assembly, interacts with RAC1. Interacts with the exocyst via EXOC4 and EXOC8; required for the localization of both SH3BP1 and the exocyst to the leading edge of migrating cells. Interacts with CD2AP and CGNL1; probably part of a complex at cell junctions. Interacts with CAPZA1; recruits CAPZA1 to forming cell junctions. May interact with AFDN. Interacts with PLXND1; they dissociate upon SEMA3E binding to PLXND1 allowing SH3BP1 to transduce downstream signal through RAC1 inactivation. Interacts with ABL1, GRB2 and SRC (via SH3 domain). In terms of tissue distribution, expressed in all tissues examined. Highest levels found in spleen and brain, lowest in heart and liver.

Its subcellular location is the cell projection. It localises to the cell junction. The protein localises to the tight junction. The protein resides in the adherens junction. It is found in the phagocytic cup. Its subcellular location is the nucleus. It localises to the cytoplasm. The protein localises to the cytosol. In terms of biological role, GTPase activating protein (GAP) which specifically converts GTP-bound Rho-type GTPases including RAC1 and CDC42 in their inactive GDP-bound form. By specifically inactivating RAC1 at the leading edge of migrating cells, it regulates the spatiotemporal organization of cell protrusions which is important for proper cell migration. Also negatively regulates CDC42 in the process of actin remodeling and the formation of epithelial cell junctions. Through its GAP activity toward RAC1 and/or CDC42 plays a specific role in phagocytosis of large particles. Specifically recruited by a PI3 kinase/PI3K-dependent mechanism to sites of large particles engagement, inactivates RAC1 and/or CDC42 allowing the reorganization of the underlying actin cytoskeleton required for engulfment. It also plays a role in angiogenesis and the process of repulsive guidance as part of a semaphorin-plexin signaling pathway. Following the binding of PLXND1 to extracellular SEMA3E it dissociates from PLXND1 and inactivates RAC1, inducing the intracellular reorganization of the actin cytoskeleton and the collapse of cells. The chain is SH3 domain-binding protein 1 from Mus musculus (Mouse).